The primary structure comprises 652 residues: DNA ligase (652 aa).

NAD(+) is bound by residues 29–33 (DSDYD), 78–79 (SL), and Glu107. Lys109 (N6-AMP-lysine intermediate) is an active-site residue. NAD(+) is bound by residues Arg130, Glu164, Lys278, and Lys302. Residues Cys395, Cys398, Cys413, and Cys418 each coordinate Zn(2+). In terms of domain architecture, BRCT spans 577 to 652 (NSDAALFGLT…IEDEDWLRQL (76 aa)).

This sequence belongs to the NAD-dependent DNA ligase family. LigA subfamily. Mg(2+) serves as cofactor. The cofactor is Mn(2+).

The catalysed reaction is NAD(+) + (deoxyribonucleotide)n-3'-hydroxyl + 5'-phospho-(deoxyribonucleotide)m = (deoxyribonucleotide)n+m + AMP + beta-nicotinamide D-nucleotide.. In terms of biological role, DNA ligase that catalyzes the formation of phosphodiester linkages between 5'-phosphoryl and 3'-hydroxyl groups in double-stranded DNA using NAD as a coenzyme and as the energy source for the reaction. It is essential for DNA replication and repair of damaged DNA. The chain is DNA ligase from Streptococcus pyogenes serotype M49 (strain NZ131).